The sequence spans 184 residues: Probable DNA-directed RNA polymerase subunit delta (184 aa).

Residues 14-82 (KSFIDMAHTL…GENNWGLRDW (69 aa)) form the HTH HARE-type domain. Residues 114-184 (LLGEEEEEID…FNDDPDDDKI (71 aa)) are disordered. Over residues 117 to 184 (EEEEEIDDQE…FNDDPDDDKI (68 aa)) the composition is skewed to acidic residues.

It belongs to the RpoE family. In terms of assembly, RNAP is composed of a core of 2 alpha, a beta and a beta' subunits. The core is associated with a delta subunit and one of several sigma factors.

Participates in both the initiation and recycling phases of transcription. In the presence of the delta subunit, RNAP displays an increased specificity of transcription, a decreased affinity for nucleic acids, and an increased efficiency of RNA synthesis because of enhanced recycling. This chain is Probable DNA-directed RNA polymerase subunit delta, found in Staphylococcus carnosus (strain TM300).